The chain runs to 252 residues: Phosphoglycolate phosphatase (252 aa).

The active-site Nucleophile is the Asp13. Residues Asp13, Asp15, and Asp192 each coordinate Mg(2+).

This sequence belongs to the HAD-like hydrolase superfamily. CbbY/CbbZ/Gph/YieH family. In terms of assembly, monomer. The cofactor is Mg(2+). Chloride is required as a cofactor.

The catalysed reaction is 2-phosphoglycolate + H2O = glycolate + phosphate. Its pathway is organic acid metabolism; glycolate biosynthesis; glycolate from 2-phosphoglycolate: step 1/1. Its function is as follows. Specifically catalyzes the dephosphorylation of 2-phosphoglycolate. Is involved in the dissimilation of the intracellular 2-phosphoglycolate formed during the DNA repair of 3'-phosphoglycolate ends, a major class of DNA lesions induced by oxidative stress. This is Phosphoglycolate phosphatase from Shigella dysenteriae serotype 1 (strain Sd197).